The sequence spans 790 residues: Exocyst complex component SEC15A (790 aa).

Residues 49–70 (LVHQLKNVARKKEAEIEDLCKT) adopt a coiled-coil conformation.

The protein belongs to the SEC15 family. The exocyst complex is composed of SEC3, SEC5, SEC6, SEC8, SEC10, EXO70A1 and EXO84B.

The protein localises to the cytoplasm. It localises to the cytosol. Functionally, component of the exocyst complex involved in the docking of exocytic vesicles with fusion sites on the plasma membrane during regulated or polarized secretion. Involved in polarized cell growth and organ morphogenesis. During cytokinesis, involved in cell plate initiation, cell plate maturation and formation of new primary cell wall. The chain is Exocyst complex component SEC15A (SEC15A) from Arabidopsis thaliana (Mouse-ear cress).